Consider the following 261-residue polypeptide: Cytochrome c oxidase subunit 3 (261 aa).

Topologically, residues 1–15 are mitochondrial matrix; that stretch reads MTHQSHAYHMVKPSP. A helical transmembrane segment spans residues 16–34; it reads WPLTGALSALLMTSGLAMW. The Mitochondrial intermembrane segment spans residues 35–40; the sequence is FHFHSM. A helical transmembrane segment spans residues 41-66; it reads TLLMLGLLTNTLTMYQWWRDVTREST. The Mitochondrial matrix portion of the chain corresponds to 67 to 72; sequence YQGHHT. A helical membrane pass occupies residues 73-105; it reads PPVQKGLRYGMILFITSEVFFFAGFFWAFYHSS. Residues 106–128 are Mitochondrial intermembrane-facing; sequence LAPTPQLGGHWPPTGITPLNPLE. The chain crosses the membrane as a helical span at residues 129–152; that stretch reads VPLLNTSVLLASGVSITWAHHSLM. Topologically, residues 153–155 are mitochondrial matrix; that stretch reads ENN. A helical transmembrane segment spans residues 156–183; the sequence is RNQMIQALLITILLGLYFTLLQASEYFE. Over 184 to 190 the chain is Mitochondrial intermembrane; sequence SPFTISD. A helical transmembrane segment spans residues 191–223; it reads GIYGSTFFVATGFHGLHVIIGSTFLTICFIRQL. The Mitochondrial matrix segment spans residues 224–232; the sequence is MFHFTSKHH. A helical membrane pass occupies residues 233–256; the sequence is FGFEAAAWYWHFVDVVWLFLYVSI. Residues 257–261 lie on the Mitochondrial intermembrane side of the membrane; that stretch reads YWWGS.

The protein belongs to the cytochrome c oxidase subunit 3 family. As to quaternary structure, component of the cytochrome c oxidase (complex IV, CIV), a multisubunit enzyme composed of 14 subunits. The complex is composed of a catalytic core of 3 subunits MT-CO1, MT-CO2 and MT-CO3, encoded in the mitochondrial DNA, and 11 supernumerary subunits COX4I1 (or COX4I2), COX5A, COX5B, COX6A1 (or COX6A2), COX6B1 (or COX6B2), COX6C, COX7A2 (or COX7A1), COX7B, COX7C, COX8A and NDUFA4, which are encoded in the nuclear genome. The complex exists as a monomer or a dimer and forms supercomplexes (SCs) in the inner mitochondrial membrane with NADH-ubiquinone oxidoreductase (complex I, CI) and ubiquinol-cytochrome c oxidoreductase (cytochrome b-c1 complex, complex III, CIII), resulting in different assemblies (supercomplex SCI(1)III(2)IV(1) and megacomplex MCI(2)III(2)IV(2)).

Its subcellular location is the mitochondrion inner membrane. It catalyses the reaction 4 Fe(II)-[cytochrome c] + O2 + 8 H(+)(in) = 4 Fe(III)-[cytochrome c] + 2 H2O + 4 H(+)(out). Component of the cytochrome c oxidase, the last enzyme in the mitochondrial electron transport chain which drives oxidative phosphorylation. The respiratory chain contains 3 multisubunit complexes succinate dehydrogenase (complex II, CII), ubiquinol-cytochrome c oxidoreductase (cytochrome b-c1 complex, complex III, CIII) and cytochrome c oxidase (complex IV, CIV), that cooperate to transfer electrons derived from NADH and succinate to molecular oxygen, creating an electrochemical gradient over the inner membrane that drives transmembrane transport and the ATP synthase. Cytochrome c oxidase is the component of the respiratory chain that catalyzes the reduction of oxygen to water. Electrons originating from reduced cytochrome c in the intermembrane space (IMS) are transferred via the dinuclear copper A center (CU(A)) of subunit 2 and heme A of subunit 1 to the active site in subunit 1, a binuclear center (BNC) formed by heme A3 and copper B (CU(B)). The BNC reduces molecular oxygen to 2 water molecules using 4 electrons from cytochrome c in the IMS and 4 protons from the mitochondrial matrix. This chain is Cytochrome c oxidase subunit 3 (MT-CO3), found in Homo sapiens (Human).